The sequence spans 1218 residues: NACHT, LRR and PYD domains-containing protein 1a allele 1 (1218 aa).

The disordered stretch occupies residues 1–61; it reads MEESQSKQES…SLPGWSSTSN (61 aa). Residues 7-29 show a composition bias toward polar residues; it reads KQESNTRVAQHGSQQDVDPTFQT. The 310-residue stretch at 175–484 folds into the NACHT domain; it reads QLVIIEGAAG…EFFAAMSYIL (310 aa). 181-188 serves as a coordination point for ATP; it reads GAAGIGKS. LRR repeat units follow at residues 343–364, 673–693, and 730–750; these read KERN…LTLC, NLEE…RSLC, and RLAE…RQLC. A compositionally biased stretch (polar residues) spans 799 to 815; sequence TMPTENTDGEESLTSSK. A disordered region spans residues 799 to 842; sequence TMPTENTDGEESLTSSKQQQQQSGDKHMEPLGTDDDFWGPSGPV. A ZU5 region spans residues 835 to 968; it reads FWGPSGPVST…HFAVLENPSF (134 aa). In terms of domain architecture, FIIND spans 835–1118; that stretch reads FWGPSGPVST…LRPALPRMAS (284 aa). Residues 969 to 1118 are UPA; the sequence is SPMGVLLRMI…LRPALPRMAS (150 aa). One can recognise a CARD domain in the interval 1122–1211; that stretch reads DAPALLHFVD…HLIMDLLEKS (90 aa).

It belongs to the NLRP family. In terms of assembly, interacts (via LRR repeats) with BCL2 and BCL2L1 (via the loop between motifs BH4 and BH3). Interacts with NOD2; this interaction is enhanced in the presence of muramyl dipeptide (MDP) and increases IL1B release. Interacts with EIF2AK2/PKR; this interaction requires EIF2AK2 activity, is accompanied by EIF2AK2 autophosphorylation and promotes inflammasome assembly in response to danger-associated signals. Interacts with MEFV; this interaction targets Nlrp1a to degradation by autophagy, hence preventing excessive IL1B- and IL18-mediated inflammation. Interacts with DPP9; leading to inhibit activation of the inflammasome. DPP9 acts via formation of a ternary complex, composed of a DPP9 homodimer, one full-length NLRP1 protein, and one cleaved C-terminus of Nlrp1a (NACHT, LRR and PYD domains-containing protein 1a, C-terminus). Interacts with DPP8; leading to inhibit activation of the inflammasome, probably via formation of a ternary complex with DPP8. Interacts with the C-terminal part of Nlrp1a (NACHT, LRR and PYD domains-containing protein 1a, C-terminus) in absence of pathogens and other damage-associated signals. As to quaternary structure, interacts with the N-terminal part of Nlrp1a (NACHT, LRR and PYD domains-containing protein 1a, N-terminus) in absence of pathogens and other damage-associated signals. Homomultimer; forms the Nlrp1a inflammasome polymeric complex, a filament composed of homopolymers of this form in response to pathogens and other damage-associated signals. The Nlrp1a inflammasome polymeric complex directly recruits pro-caspase-1 (proCASP1) independently of PYCARD/ASC. Interacts (via CARD domain) with CASP1 (via CARD domain); leading to CASP1 activation. Post-translationally, autocatalytically cleaved. Autocatalytic cleavage in FIIND region occurs constitutively, prior to activation signals, and is required for inflammasome activity (IL1B release), possibly by facilitating CASP1 binding. Both N- and C-terminal parts remain associated non-covalently. In terms of processing, (Microbial infection) Cleavage by B.anthracis lethal toxin (LT) endopeptidase promotes ubiquitination and degradation of the N-terminal part, releasing the cleaved C-terminal part of the protein (NACHT, LRR and PYD domains-containing protein 1a, C-terminus), which polymerizes and forms the Nlrp1a inflammasome. Ubiquitinated in response to pathogen-associated signals, leading to its degradation by the proteasome and subsequent release of the cleaved C-terminal part of the protein (NACHT, LRR and PYD domains-containing protein 1a, C-terminus), which polymerizes and forms the Nlrp1a inflammasome.

It is found in the cytoplasm. Its subcellular location is the cytosol. The protein resides in the nucleus. The protein localises to the inflammasome. Activated by cleavage by B.anthracis lethal toxin (LT) endopeptidase. Cleavage by LT promotes ubiquitination and degradation of the N-terminal part, releasing the cleaved C-terminal part of the protein (NACHT, LRR and PYD domains-containing protein 1a, C-terminus), which polymerizes and forms the Nlrp1a inflammasome. Nlrp1a inflammasome is inhibited by DPP8 and DPP9, which sequester the C-terminal fragment of Nlrp1a (NACHT, LRR and PYD domains-containing protein 1a, C-terminus) in a ternary complex, thereby preventing Nlrp1a oligomerization and activation. Nlrp1a inflammasome is weakly activated by Val-boroPro (Talabostat, PT-100), an inhibitor of dipeptidyl peptidases DPP8 and DPP9. Val-boroPro relieves inhibition of DPP8 and/or DPP9 by promoting disruption of the ternary complex, releasing its C-terminal part from autoinhibition. Weakly activated by Toxoplasma gondii. Its function is as follows. Acts as the sensor component of the Nlrp1a inflammasome, which mediates inflammasome activation in response to various pathogen-associated signals, leading to subsequent pyroptosis. Inflammasomes are supramolecular complexes that assemble in the cytosol in response to pathogens and other damage-associated signals and play critical roles in innate immunity and inflammation. Acts as a recognition receptor (PRR): recognizes specific pathogens and other damage-associated signals, such as B.anthracis lethal toxin (LT) or Val-boroPro inhibitor, and mediates the formation of the inflammasome polymeric complex. In response to pathogen-associated signals, the N-terminal part of Nlrp1a is degraded by the proteasome, releasing the cleaved C-terminal part of the protein (NACHT, LRR and PYD domains-containing protein 1a, C-terminus), which polymerizes to initiate the formation of the inflammasome complex: the inflammasome directly recruits pro-caspase-1 (proCASP1) independently of PYCARD/ASC and promotes caspase-1 (CASP1) activation, which subsequently cleaves and activates inflammatory cytokines IL1B and IL18 and gasdermin-D (GSDMD), leading to pyroptosis. In the absence of GSDMD expression, the Nlrp1a inflammasome is able to recruit and activate CASP8, leading to activation of gasdermin-E (GSDME). Constitutes the precursor of the Nlrp1a inflammasome, which mediates autoproteolytic processing within the FIIND domain to generate the N-terminal and C-terminal parts, which are associated non-covalently in absence of pathogens and other damage-associated signals. In terms of biological role, regulatory part that prevents formation of the Nlrp1a inflammasome: in absence of pathogens and other damage-associated signals, interacts with the C-terminal part of Nlrp1a (NACHT, LRR and PYD domains-containing protein 1a, C-terminus), preventing activation of the Nlrp1a inflammasome. In response to pathogen-associated signals, this part is ubiquitinated by the N-end rule pathway and degraded by the proteasome, releasing the cleaved C-terminal part of the protein, which polymerizes and forms the Nlrp1a inflammasome. Functionally, constitutes the active part of the Nlrp1a inflammasome. In absence of pathogens and other damage-associated signals, interacts with the N-terminal part of Nlrp1a (NACHT, LRR and PYD domains-containing protein 1a, N-terminus), preventing activation of the Nlrp1a inflammasome. In response to pathogen-associated signals, the N-terminal part of Nlrp1a is degraded by the proteasome, releasing this form, which polymerizes to form the Nlrp1a inflammasome complex: the Nlrp1a inflammasome complex then directly recruits pro-caspase-1 (proCASP1) and promotes caspase-1 (CASP1) activation, leading to gasdermin-D (GSDMD) cleavage and subsequent pyroptosis. This chain is NACHT, LRR and PYD domains-containing protein 1a allele 1, found in Rattus norvegicus (Rat).